We begin with the raw amino-acid sequence, 494 residues long: Vacuolar-processing enzyme (494 aa).

A signal peptide spans 1-20 (MTRLASGVLITLLVALAGIA). N151 carries an N-linked (GlcNAc...) asparagine glycan. Residue H178 is part of the active site. C220 functions as the Nucleophile in the catalytic mechanism. The cysteines at positions 253 and 267 are disulfide-linked. N-linked (GlcNAc...) asparagine glycosylation occurs at N336. 2 disulfides stabilise this stretch: C430-C460 and C442-C477.

The protein belongs to the peptidase C13 family. High levels are seen in the flowers, a lower level expression is seen in the leaves, while very low levels are seen in the stems and roots.

In terms of biological role, asparagine-specific endopeptidase that may be involved in processing of proteins targeted to vacuoles that accumulate during ethylene-regulated processes such as flower opening and flavedo degreening. This is Vacuolar-processing enzyme from Citrus sinensis (Sweet orange).